Consider the following 122-residue polypeptide: Chorismate mutase AroH (122 aa).

Residues 2–120 enclose the Chorismate mutase aroH-type domain; it reads VRGIRGAITV…AVRLRPDLES (119 aa). Arginine 6, arginine 89, and tyrosine 107 together coordinate prephenate.

As to quaternary structure, homotrimer.

Its subcellular location is the cytoplasm. It carries out the reaction chorismate = prephenate. It functions in the pathway metabolic intermediate biosynthesis; prephenate biosynthesis; prephenate from chorismate: step 1/1. With respect to regulation, inhibited by 40% with 500 uM tyrosine, and a tyrosine concentration as high as 5 mM reduced activity to 5%. In terms of biological role, catalyzes the Claisen rearrangement of chorismate to prephenate. Probably involved in the aromatic amino acid biosynthesis. The polypeptide is Chorismate mutase AroH (Thermus thermophilus).